Here is a 121-residue protein sequence, read N- to C-terminus: Small ribosomal subunit protein uS12 (121 aa).

Positions 1–25 (MPTINQLVRKNRKQKKSQSKSPVLE) are disordered. The segment covering 9 to 18 (RKNRKQKKSQ) has biased composition (basic residues). Residue Asp-89 is modified to 3-methylthioaspartic acid.

The protein belongs to the universal ribosomal protein uS12 family. Part of the 30S ribosomal subunit. Contacts proteins S8 and S17. May interact with IF1 in the 30S initiation complex.

Functionally, with S4 and S5 plays an important role in translational accuracy. Its function is as follows. Interacts with and stabilizes bases of the 16S rRNA that are involved in tRNA selection in the A site and with the mRNA backbone. Located at the interface of the 30S and 50S subunits, it traverses the body of the 30S subunit contacting proteins on the other side and probably holding the rRNA structure together. The combined cluster of proteins S8, S12 and S17 appears to hold together the shoulder and platform of the 30S subunit. This chain is Small ribosomal subunit protein uS12, found in Rhodopirellula baltica (strain DSM 10527 / NCIMB 13988 / SH1).